The chain runs to 364 residues: Putative agmatine deiminase (364 aa).

Cys355 acts as the Amidino-cysteine intermediate in catalysis.

Belongs to the agmatine deiminase family.

The enzyme catalyses agmatine + H2O = N-carbamoylputrescine + NH4(+). The polypeptide is Putative agmatine deiminase (Mycoplasma capricolum subsp. capricolum (strain California kid / ATCC 27343 / NCTC 10154)).